The sequence spans 139 residues: Large ribosomal subunit protein bL9m (139 aa).

A disordered region spans residues 83 to 121 (DHQQLSKRHETEVQKNMELRKESVFGHKKEEKPKEEKKG).

Belongs to the bacterial ribosomal protein bL9 family. In terms of assembly, component of the mitochondrial large ribosomal subunit (mt-LSU). Mature yeast 74S mitochondrial ribosomes consist of a small (37S) and a large (54S) subunit. The 37S small subunit contains a 15S ribosomal RNA (15S mt-rRNA) and 34 different proteins. The 54S large subunit contains a 21S rRNA (21S mt-rRNA) and 46 different proteins.

The protein resides in the mitochondrion. Its function is as follows. Component of the mitochondrial ribosome (mitoribosome), a dedicated translation machinery responsible for the synthesis of mitochondrial genome-encoded proteins, including at least some of the essential transmembrane subunits of the mitochondrial respiratory chain. The mitoribosomes are attached to the mitochondrial inner membrane and translation products are cotranslationally integrated into the membrane. This Saccharomyces cerevisiae (strain ATCC 204508 / S288c) (Baker's yeast) protein is Large ribosomal subunit protein bL9m (MRPL50).